A 643-amino-acid polypeptide reads, in one-letter code: Threonine--tRNA ligase (643 aa).

The TGS domain maps to 3–64 (DVVKITFPDG…EEDGAISIIT (62 aa)). Positions 245–542 (DHRKLGKELD…LIEEYKGAFP (298 aa)) are catalytic. 3 residues coordinate Zn(2+): C338, H389, and H519.

This sequence belongs to the class-II aminoacyl-tRNA synthetase family. In terms of assembly, homodimer. Zn(2+) is required as a cofactor.

The protein localises to the cytoplasm. The enzyme catalyses tRNA(Thr) + L-threonine + ATP = L-threonyl-tRNA(Thr) + AMP + diphosphate + H(+). Catalyzes the attachment of threonine to tRNA(Thr) in a two-step reaction: L-threonine is first activated by ATP to form Thr-AMP and then transferred to the acceptor end of tRNA(Thr). Also edits incorrectly charged L-seryl-tRNA(Thr). The chain is Threonine--tRNA ligase from Anoxybacillus flavithermus (strain DSM 21510 / WK1).